Reading from the N-terminus, the 298-residue chain is MAAVNCHFFQLSRHLKPSRPSFSCSASQPSQNNIKVIINGAAKEIGRAAVVAVTKARGMELAGAVDNHFVGEDIGLLCDMEEPLEIPVVSDLTMVLGSISQGKEVGVVIDFTDPSTVYENVKQATAFGMKSVVYVPRIKPETVSALSALCDKATMGCLVAPTLSIGSILLQQAVIMASFHYNNVELVESRPNAADLPSPEAIQIANNISNLGQIYNREDSSTDVQARGQVIGEDGVRVHSMVLPGLPSSTQVYFSSPGDVYTVKHDIIDVRSLMPGLLLAIRKVVRLKNLVYGLEKFL.

Residues 1-25 (MAAVNCHFFQLSRHLKPSRPSFSCS) constitute a chloroplast transit peptide. Residue 160 to 163 (APTL) coordinates NAD(+).

This sequence belongs to the DapB family. Expressed specifically in leaves.

The protein localises to the plastid. The protein resides in the chloroplast stroma. Functionally, dihydrodipicolinate reductase (DHPR)-like protein that may not function as DHPR in lysine biosynthesis. Required for both formation and activity of the chloroplast NAD(P)H dehydrogenase (NDH) complex of the photosynthetic electron transport chain. May function in assembly or stabilization of the NDH complex. This is Dihydrodipicolinate reductase-like protein CRR1, chloroplastic from Arabidopsis thaliana (Mouse-ear cress).